A 465-amino-acid polypeptide reads, in one-letter code: Na(+)-translocating NADH-quinone reductase subunit A (465 aa).

The protein belongs to the NqrA family. In terms of assembly, composed of six subunits; NqrA, NqrB, NqrC, NqrD, NqrE and NqrF.

The enzyme catalyses a ubiquinone + n Na(+)(in) + NADH + H(+) = a ubiquinol + n Na(+)(out) + NAD(+). NQR complex catalyzes the reduction of ubiquinone-1 to ubiquinol by two successive reactions, coupled with the transport of Na(+) ions from the cytoplasm to the periplasm. NqrA to NqrE are probably involved in the second step, the conversion of ubisemiquinone to ubiquinol. The polypeptide is Na(+)-translocating NADH-quinone reductase subunit A (Chlamydia trachomatis serovar L2b (strain UCH-1/proctitis)).